The primary structure comprises 77 residues: Large ribosomal subunit protein bL31 (77 aa).

This sequence belongs to the bacterial ribosomal protein bL31 family. Type A subfamily. In terms of assembly, part of the 50S ribosomal subunit.

Its function is as follows. Binds the 23S rRNA. This Microcystis aeruginosa (strain NIES-843 / IAM M-2473) protein is Large ribosomal subunit protein bL31.